We begin with the raw amino-acid sequence, 1668 residues long: DNA polymerase (1668 aa).

DOD-type homing endonuclease domains follow at residues 739–872 (LLGY…SLGV) and 1191–1330 (LIGL…LVGV).

It belongs to the DNA polymerase type-B family. In terms of processing, this protein undergoes a protein self splicing that involves a post-translational excision of the intervening region (intein) followed by peptide ligation.

The catalysed reaction is DNA(n) + a 2'-deoxyribonucleoside 5'-triphosphate = DNA(n+1) + diphosphate. In addition to polymerase activity, this DNA polymerase exhibits 3' to 5' exonuclease activity. Its function is as follows. PI-ThyI and PI-ThyII are endonucleases. PI-ThyI cleaves the inteinless sequence of the Thy DNA pol gene. It requires a 21-bp minimal recognition sequence. The polypeptide is DNA polymerase (pol) (Thermococcus hydrothermalis).